A 96-amino-acid polypeptide reads, in one-letter code: Aspartyl/glutamyl-tRNA(Asn/Gln) amidotransferase subunit C (96 aa).

This sequence belongs to the GatC family. As to quaternary structure, heterotrimer of A, B and C subunits.

The catalysed reaction is L-glutamyl-tRNA(Gln) + L-glutamine + ATP + H2O = L-glutaminyl-tRNA(Gln) + L-glutamate + ADP + phosphate + H(+). It catalyses the reaction L-aspartyl-tRNA(Asn) + L-glutamine + ATP + H2O = L-asparaginyl-tRNA(Asn) + L-glutamate + ADP + phosphate + 2 H(+). Functionally, allows the formation of correctly charged Asn-tRNA(Asn) or Gln-tRNA(Gln) through the transamidation of misacylated Asp-tRNA(Asn) or Glu-tRNA(Gln) in organisms which lack either or both of asparaginyl-tRNA or glutaminyl-tRNA synthetases. The reaction takes place in the presence of glutamine and ATP through an activated phospho-Asp-tRNA(Asn) or phospho-Glu-tRNA(Gln). This chain is Aspartyl/glutamyl-tRNA(Asn/Gln) amidotransferase subunit C, found in Wolinella succinogenes (strain ATCC 29543 / DSM 1740 / CCUG 13145 / JCM 31913 / LMG 7466 / NCTC 11488 / FDC 602W) (Vibrio succinogenes).